A 450-amino-acid polypeptide reads, in one-letter code: MDADKIVFKVNNRVVSLKPEIIVDQYEYKYPAIKDLKKPCITLGKAPDLNKAYKSVLSGMNAAKLDPDDVCSYLAAAMQFFEGTCPEDWTSYGILIARKGDKITPDSLVEIKRTDVEGNWALTGGMELTRDPTVSEHASLVGLLLSLYRLSKISGQNTGNYKTNIADRIEQIFETAPFVKIVEHHTLMTTHKMCANWSTIPNFRFLAGTYDMFFSRIEHLYSAIRVGTVVTAYEDCSGLVSFTGFIKQINLTAREAILYFFHKNFEEEIRRMFEPGQETAVPHSYFIHFRSLGLSGKSPYSSNAVGHVFNLIHFVGCYMGQVRSLNATVIAACAPHEMSVLGGYLGEEFFGKGTFERRFFRDEKELQEYEAAELTKTDVALADDGTVNSDDEDYFSGETRSPEAVYTRIMMNGGRLKRSHIRRYVSVSSNHQARPNSFAEFLNKTYSSDS.

Serine 389 is modified (phosphoserine; by host CK2).

It belongs to the lyssavirus nucleocapsid protein family. In terms of assembly, homomultimerizes to form the nucleocapsid. Binds to viral genomic RNA. In nucleocapsid, binds protein P and thereby positions the polymerase on the template. Protein P acts as a chaperone on free protein N to prevent it from aggregation before encapsidating genomic RNA. Phosphorylated by host CK2. Unphosphorylated protein N seems to have a better affinity for leader viral promoter encapsidation. Phosphorylation of protein N in ribonucleocapsid may stabilize the interaction with protein P, thereby playing an important role in viral transcription/replication.

The protein localises to the virion. It localises to the host cytoplasm. Functionally, encapsidates the genome in a ratio of one protein N per nine ribonucleotides, protecting it from nucleases. If expressed without protein P it binds non-specifically RNA and therefore can bind it's own mRNA. Interaction with protein P abolishes any non-specific RNA binding, and prevents phosphorylation. The soluble N-P complex encapsidates specifically the genomic RNA, with protein N protecting the genome like a pearl necklace. The encapsidated genomic RNA is termed the nucleocapsid (NC) and serves as template for viral transcription and replication. Protein N binds protein P in the NC through a different interaction, and can be phosphorylated. Subsequent viral replication is dependent on intracellular concentration of newly synthesized protein N. During replication, encapsidation by protein N is coupled to RNA synthesis and all replicative products are resistant to nucleases. This is Nucleoprotein (N) from Rabies virus (strain HEP-Flury) (RABV).